The sequence spans 730 residues: Polyphosphate kinase (730 aa).

Residues 1–21 show a composition bias toward basic and acidic residues; it reads MMRHDRNVTEIDAETRPDENL. Residues 1 to 39 form a disordered region; sequence MMRHDRNVTEIDAETRPDENLWHSGDSAVGAPPAATPAA. Position 86 (N86) interacts with ATP. R423 and R453 together coordinate Mg(2+). H483 acts as the Phosphohistidine intermediate in catalysis. ATP contacts are provided by Y516, R612, and H640.

The protein belongs to the polyphosphate kinase 1 (PPK1) family. It depends on Mg(2+) as a cofactor. An intermediate of this reaction is the autophosphorylated ppk in which a phosphate is covalently linked to a histidine residue through a N-P bond.

The enzyme catalyses [phosphate](n) + ATP = [phosphate](n+1) + ADP. In terms of biological role, catalyzes the reversible transfer of the terminal phosphate of ATP to form a long-chain polyphosphate (polyP). This chain is Polyphosphate kinase, found in Mycolicibacterium paratuberculosis (strain ATCC BAA-968 / K-10) (Mycobacterium paratuberculosis).